Consider the following 116-residue polypeptide: Large ribosomal subunit protein bL20 (116 aa).

It belongs to the bacterial ribosomal protein bL20 family.

Functionally, binds directly to 23S ribosomal RNA and is necessary for the in vitro assembly process of the 50S ribosomal subunit. It is not involved in the protein synthesizing functions of that subunit. This is Large ribosomal subunit protein bL20 from Mycoplasmopsis synoviae (strain 53) (Mycoplasma synoviae).